Consider the following 185-residue polypeptide: Biofilm operon icaADBC HTH-type negative transcriptional regulator IcaR (185 aa).

The region spanning 1–59 is the HTH tetR-type domain; that stretch reads MKDKIIDNAITLFSEKGYDGTTLDDISKSVNIKKASLYYHYDNKEEIYRKSVENCFNYF. A DNA-binding region (H-T-H motif) is located at residues 22–41; sequence TLDDISKSVNIKKASLYYHY.

As to quaternary structure, homodimer.

In terms of biological role, represses transcription of the icaADBC operon necessary for biofilm production. The chain is Biofilm operon icaADBC HTH-type negative transcriptional regulator IcaR (icaR) from Staphylococcus epidermidis (strain ATCC 35984 / DSM 28319 / BCRC 17069 / CCUG 31568 / BM 3577 / RP62A).